Reading from the N-terminus, the 583-residue chain is Propane 2-monooxygenase operon transcriptional activator MimR (583 aa).

One can recognise a Sigma-54 factor interaction domain in the interval 320 to 513 (LAGRSSSFRR…LRHVLTETLR (194 aa)). ATP contacts are provided by residues 348–355 (GEKGSGRT) and 395–404 (DADFAVIVAD).

Acts as a transcriptional activator of the mimABCD operon encoding the propane 2-monooxygenase complex. This Mycolicibacterium goodii (Mycobacterium goodii) protein is Propane 2-monooxygenase operon transcriptional activator MimR.